An 886-amino-acid chain; its full sequence is DNA mismatch repair protein MutS (886 aa).

641-648 serves as a coordination point for ATP; it reads GPNMAGKS.

Belongs to the DNA mismatch repair MutS family.

This protein is involved in the repair of mismatches in DNA. It is possible that it carries out the mismatch recognition step. This protein has a weak ATPase activity. In Rickettsia felis (strain ATCC VR-1525 / URRWXCal2) (Rickettsia azadi), this protein is DNA mismatch repair protein MutS.